We begin with the raw amino-acid sequence, 352 residues long: Peptide chain release factor 1 (352 aa).

At Gln-229 the chain carries N5-methylglutamine.

The protein belongs to the prokaryotic/mitochondrial release factor family. In terms of processing, methylated by PrmC. Methylation increases the termination efficiency of RF1.

The protein localises to the cytoplasm. Peptide chain release factor 1 directs the termination of translation in response to the peptide chain termination codons UAG and UAA. The polypeptide is Peptide chain release factor 1 (Gluconacetobacter diazotrophicus (strain ATCC 49037 / DSM 5601 / CCUG 37298 / CIP 103539 / LMG 7603 / PAl5)).